Reading from the N-terminus, the 217-residue chain is LSM12 homolog A (217 aa).

The 70-residue stretch at 9-78 (VNAVNDCFSI…CSNVQVIKEC (70 aa)) folds into the Sm domain. In terms of domain architecture, AD spans 86 to 184 (QKLNLEQVKM…IIKQFFNTRP (99 aa)). Positions 185-217 (SPVPESGAAASTSSPSVSPTSSSLASGSPVPAN) are disordered. Residues 190-217 (SGAAASTSSPSVSPTSSSLASGSPVPAN) show a composition bias toward low complexity.

Belongs to the LSM12 family. Component of the Atx2-tyf activator complex, composed of Atx2, tyf, pAbp, Lsm12a. Interacts with tyf, Atx2 and pAbp.

Its function is as follows. Component of the Atx2-tyf activator complex which functions in the circadian pacemaker neurons to activate the TYF-dependent translation of per and maintain 24 hour periodicity in circadian behaviors. Within the Atx2-tyf complex, likely to function as a molecular adapter which stabilizes the interaction between Atx2 and the translational regulator tyf. This is LSM12 homolog A from Drosophila melanogaster (Fruit fly).